Reading from the N-terminus, the 1473-residue chain is Ovostatin (1473 aa).

Residues methionine 1–glycine 36 form the signal peptide. 13 N-linked (GlcNAc...) asparagine glycosylation sites follow: asparagine 67, asparagine 82, asparagine 89, asparagine 191, asparagine 342, asparagine 403, asparagine 527, asparagine 588, asparagine 757, asparagine 1141, asparagine 1221, asparagine 1315, and asparagine 1347.

The protein belongs to the protease inhibitor I39 (alpha-2-macroglobulin) family. Homotetramer, which consists of two pairs of disulfide-linked chains. Lacks the thioester bond found in other members of this family. In terms of processing, glycosylated; contains 56 glucosamine units per subunit.

Its subcellular location is the secreted. Its function is as follows. Is able to inhibit all four classes of proteinases by a unique 'trapping' mechanism. This protein has a peptide stretch, called the 'bait region' which contains specific cleavage sites for different proteinases. When a proteinase cleaves the bait region, a conformational change is induced in the protein which traps the proteinase. The entrapped enzyme remains active against low molecular weight substrates (activity against high molecular weight substrates is greatly reduced). This is Ovostatin from Gallus gallus (Chicken).